The chain runs to 286 residues: MSWIERILKKNTITKKTNIPEGIWVKCNNCNQMIYKIELEKNLEVCPKCNFHMRISARKRLEKFLDKNNILELGKNLEPKDILKFKDTKKYKDRLYIAQKLTKEKDAIIVMKGSLYKMPIVAAAFEFSFIGGSMSSVVGERFVFGVNESIKCNCPMVCFSASGGARVQEALISLMQMAKTSAALSKLRKKKIPYISVMTDPSMGGVSASIAMLGDINIAEPKALIGFAGPRVIEQTVREKLPDKFQKSEFLIQKGIIDLIIKRKNMRFSIGKLLAKITNKPEPKKE.

In terms of domain architecture, CoA carboxyltransferase N-terminal spans 23–286 (IWVKCNNCNQ…ITNKPEPKKE (264 aa)). Residues Cys-27, Cys-30, Cys-46, and Cys-49 each coordinate Zn(2+). The C4-type zinc-finger motif lies at 27 to 49 (CNNCNQMIYKIELEKNLEVCPKC).

The protein belongs to the AccD/PCCB family. Acetyl-CoA carboxylase is a heterohexamer composed of biotin carboxyl carrier protein (AccB), biotin carboxylase (AccC) and two subunits each of ACCase subunit alpha (AccA) and ACCase subunit beta (AccD). Zn(2+) serves as cofactor.

Its subcellular location is the cytoplasm. The catalysed reaction is N(6)-carboxybiotinyl-L-lysyl-[protein] + acetyl-CoA = N(6)-biotinyl-L-lysyl-[protein] + malonyl-CoA. The protein operates within lipid metabolism; malonyl-CoA biosynthesis; malonyl-CoA from acetyl-CoA: step 1/1. Functionally, component of the acetyl coenzyme A carboxylase (ACC) complex. Biotin carboxylase (BC) catalyzes the carboxylation of biotin on its carrier protein (BCCP) and then the CO(2) group is transferred by the transcarboxylase to acetyl-CoA to form malonyl-CoA. The sequence is that of Acetyl-coenzyme A carboxylase carboxyl transferase subunit beta from Wigglesworthia glossinidia brevipalpis.